We begin with the raw amino-acid sequence, 433 residues long: 3-phosphoshikimate 1-carboxyvinyltransferase (433 aa).

The 3-phosphoshikimate site is built by Lys-23, Ser-24, and Arg-28. A phosphoenolpyruvate-binding site is contributed by Lys-23. Gly-95 and Arg-123 together coordinate phosphoenolpyruvate. 3-phosphoshikimate-binding residues include Ser-167, Gln-169, Asp-317, and Lys-344. Gln-169 contacts phosphoenolpyruvate. Asp-317 serves as the catalytic Proton acceptor. Phosphoenolpyruvate is bound by residues Arg-348 and Arg-390.

The protein belongs to the EPSP synthase family. In terms of assembly, monomer.

The protein resides in the cytoplasm. The catalysed reaction is 3-phosphoshikimate + phosphoenolpyruvate = 5-O-(1-carboxyvinyl)-3-phosphoshikimate + phosphate. It functions in the pathway metabolic intermediate biosynthesis; chorismate biosynthesis; chorismate from D-erythrose 4-phosphate and phosphoenolpyruvate: step 6/7. In terms of biological role, catalyzes the transfer of the enolpyruvyl moiety of phosphoenolpyruvate (PEP) to the 5-hydroxyl of shikimate-3-phosphate (S3P) to produce enolpyruvyl shikimate-3-phosphate and inorganic phosphate. This Staphylococcus epidermidis (strain ATCC 12228 / FDA PCI 1200) protein is 3-phosphoshikimate 1-carboxyvinyltransferase.